The primary structure comprises 1220 residues: Plasma membrane calcium-transporting ATPase 1 (1220 aa).

G2 carries the post-translational modification N-acetylglycine. Residues 2 to 105 are Cytoplasmic-facing; it reads GDMANNSVAY…KTFLQLVWEA (104 aa). Phosphoserine is present on residues S8 and S17. Residues 106 to 126 form a helical membrane-spanning segment; it reads LQDVTLIILEIAAIVSLGLSF. At 127 to 154 the chain is on the extracellular side; the sequence is YQPPEGDNALCGEVSVGEEEGEGETGWI. A helical membrane pass occupies residues 155-175; that stretch reads EGAAILLSVVCVVLVTAFNDW. Topologically, residues 176–366 are cytoplasmic; that stretch reads SKEKQFRGLQ…KEKSVLQGKL (191 aa). Residues 297-356 form a disordered region; that stretch reads EEEKKDEKKKEKKNKKQDGAIENRNKAKAQDGAAMEMQPLKSEEGGDGDEKDKKKANLPK. Basic and acidic residues-rich tracts occupy residues 312 to 325 and 337 to 356; these read KQDGAIENRNKAKA and KSEEGGDGDEKDKKKANLPK. S338 carries the phosphoserine modification. A helical transmembrane segment spans residues 367 to 386; it reads TKLAVQIGKAGLLMSAITVI. The Extracellular portion of the chain corresponds to 387-418; sequence ILVLYFVIDTFWVQKRPWLAECTPIYIQYFVK. Residues 419-439 form a helical membrane-spanning segment; sequence FFIIGVTVLVVAVPEGLPLAV. Over 440-855 the chain is Cytoplasmic; it reads TISLAYSVKK…RNVYDSISKF (416 aa). The active-site 4-aspartylphosphate intermediate is the D475. Residues D475, T477, and D797 each coordinate Mg(2+). The chain crosses the membrane as a helical span at residues 856–876; sequence LQFQLTVNVVAVIVAFTGACI. The Extracellular segment spans residues 877–882; sequence TQDSPL. Residues 883–903 traverse the membrane as a helical segment; it reads KAVQMLWVNLIMDTLASLALA. Topologically, residues 904 to 927 are cytoplasmic; it reads TEPPTESLLLRKPYGRNKPLISRT. Residues 928 to 948 form a helical membrane-spanning segment; sequence MMKNILGHAFYQLVVVFTLLF. Over 949–971 the chain is Extracellular; the sequence is AGEKFFDIDSGRNAPLHAPPSEH. A helical membrane pass occupies residues 972–991; the sequence is YTIVFNTFVLMQLFNEINAR. Residues 992-1005 are Cytoplasmic-facing; that stretch reads KIHGERNVFEGIFN. The chain crosses the membrane as a helical span at residues 1006–1027; that stretch reads NAIFCTIVLGTFVVQIIIVQFG. The Extracellular portion of the chain corresponds to 1028–1039; that stretch reads GKPFSCSELSIE. Residues 1040–1060 form a helical membrane-spanning segment; that stretch reads QWLWSIFLGMGTLLWGQLIST. Residues 1061–1220 are Cytoplasmic-facing; the sequence is IPTSRLKFLK…SPLHSLETSL (160 aa). The calmodulin-binding subdomain A stretch occupies residues 1100–1117; that stretch reads LRRGQILWFRGLNRIQTQ. T1116 is subject to Phosphothreonine; by PKC. A required for basolateral membrane targeting region spans residues 1118-1220; that stretch reads IRVVNAFRSS…SPLHSLETSL (103 aa). Residues S1140 and S1155 each carry the phosphoserine modification. Positions 1160–1220 are disordered; that stretch reads PLIDDTDAED…SPLHSLETSL (61 aa). The residue at position 1165 (T1165) is a Phosphothreonine. S1178 bears the Phosphoserine; by PKA mark. Position 1182 is a phosphoserine (S1182). Positions 1200–1220 are enriched in polar residues; that stretch reads MNKSATSSSPGSPLHSLETSL.

The protein belongs to the cation transport ATPase (P-type) (TC 3.A.3) family. Type IIB subfamily. In terms of assembly, monomer. Dimer. Oligomer. Calmodulin binding. Interacts with PDZD11. Interacts with SLC35G1 and STIM1; inhibits calcium-transporting ATPase activity after store depletion. Interacts with YWHAE; interacts with the monomeric and dimeric forms of the YWHAE but prefer the monomer form; this interaction inhibits calcium-transporting ATPase activity. Interacts with NPTN; this interaction stabilizes ATP2B1 and increases ATPase activity; this interaction controls T cell calcium homeostasis following T cell activation. Interacts with EPB41; regulates small intestinal calcium absorption through regulation of membrane expression of ATP2B1. In terms of tissue distribution, isoform B: Ubiquitously expressed. Isoform C: Found in brain cortex, skeletal muscle and heart muscle. Isoform D: Has only been found in fetal skeletal muscle. Isoform K: Found in small intestine and liver. Abundantly expressed in the endometrial epithelial cells and glandular epithelial cells in early-proliferative phase and early-secretory phases.

Its subcellular location is the cell membrane. It is found in the basolateral cell membrane. It localises to the synapse. The protein resides in the presynaptic cell membrane. The protein localises to the cytoplasmic vesicle. Its subcellular location is the secretory vesicle. It is found in the synaptic vesicle membrane. The enzyme catalyses Ca(2+)(in) + ATP + H2O = Ca(2+)(out) + ADP + phosphate + H(+). Functionally, catalyzes the hydrolysis of ATP coupled with the transport of calcium from the cytoplasm to the extracellular space thereby maintaining intracellular calcium homeostasis. Plays a role in blood pressure regulation through regulation of intracellular calcium concentration and nitric oxide production leading to regulation of vascular smooth muscle cells vasoconstriction. Positively regulates bone mineralization through absorption of calcium from the intestine. Plays dual roles in osteoclast differentiation and survival by regulating RANKL-induced calcium oscillations in preosteoclasts and mediating calcium extrusion in mature osteoclasts. Regulates insulin sensitivity through calcium/calmodulin signaling pathway by regulating AKT1 activation and NOS3 activation in endothelial cells. May play a role in synaptic transmission by modulating calcium and proton dynamics at the synaptic vesicles. In Homo sapiens (Human), this protein is Plasma membrane calcium-transporting ATPase 1.